The primary structure comprises 426 residues: Pyruvate, phosphate dikinase regulatory protein, chloroplastic (426 aa).

A chloroplast-targeting transit peptide spans 1–41 (MIGCAKPLAAPLQAWARPPSPAGRRLPPSFCAPDTSPALTR). Disordered stretches follow at residues 1 to 76 (MIGC…HLDR) and 94 to 124 (AALSSASVSAPPVIKSPRPEDAAVAAEDGED). Low complexity predominate over residues 94-119 (AALSSASVSAPPVIKSPRPEDAAVAA). Position 153–160 (153–160 (HSVNAALG)) interacts with ADP.

It belongs to the pyruvate, phosphate/water dikinase regulatory protein family. PDRP subfamily. In terms of assembly, homodimer at pH 7.5 and homotetramer at pH 8.3. Mg(2+) is required as a cofactor. Leaf mesophyll-cells.

The protein resides in the plastid. Its subcellular location is the chloroplast stroma. The enzyme catalyses N(tele)-phospho-L-histidyl/L-threonyl-[pyruvate, phosphate dikinase] + ADP = N(tele)-phospho-L-histidyl/O-phospho-L-threonyl-[pyruvate, phosphate dikinase] + AMP + H(+). It carries out the reaction N(tele)-phospho-L-histidyl/O-phospho-L-threonyl-[pyruvate, phosphate dikinase] + phosphate + H(+) = N(tele)-phospho-L-histidyl/L-threonyl-[pyruvate, phosphate dikinase] + diphosphate. The protein operates within photosynthesis; C4 acid pathway. Its activity is regulated as follows. Regulated by light/dark exposure. Functionally, bifunctional serine/threonine kinase and phosphorylase involved in the dark/light-mediated regulation of PPDK by catalyzing its phosphorylation/dephosphorylation. Dark/light-induced changes in stromal concentrations of the competing ADP and Pi substrates govern the direction of the reaction. In the dark, phosphorylates the catalytic intermediate of PPDK (PPDK-HisP), inactivating it. Light exposure induces the phosphorolysis reaction that reactivates PPDK. Phosphorylates PPDK at both Ser-528 and Thr-527. Can use ADP as a high specificity substrate and GDP as a lower affinity substrate, but has no activity with UDP. The protein is Pyruvate, phosphate dikinase regulatory protein, chloroplastic (PDRP1) of Zea mays (Maize).